The chain runs to 496 residues: NADP-dependent glyceraldehyde-3-phosphate dehydrogenase (496 aa).

Residues arginine 116 and 169–170 (NY) contribute to the substrate site. Lysine 192, threonine 195, and aspartate 230 together coordinate NADP(+). An NAD(+)-binding site is contributed by 245–249 (GGDTG). Glutamate 264 serves as the catalytic Proton acceptor. 297–299 (RCT) provides a ligand contact to substrate. Cysteine 298 functions as the Nucleophile in the catalytic mechanism. Position 391 (glutamate 391) interacts with NADP(+). Residue arginine 451 participates in substrate binding.

This sequence belongs to the aldehyde dehydrogenase family.

The protein resides in the cytoplasm. The catalysed reaction is D-glyceraldehyde 3-phosphate + NADP(+) + H2O = (2R)-3-phosphoglycerate + NADPH + 2 H(+). In terms of biological role, important as a means of generating NADPH for biosynthetic reactions. The chain is NADP-dependent glyceraldehyde-3-phosphate dehydrogenase (GAPN) from Nicotiana plumbaginifolia (Leadwort-leaved tobacco).